We begin with the raw amino-acid sequence, 2167 residues long: GTPase-activating protein BEM2/IPL2 (2167 aa).

Disordered regions lie at residues 1 to 209 (MKGL…NDNE), 243 to 305 (TNYN…ASAR), and 353 to 372 (NSSI…NNQA). Positions 12 to 51 (SSTASASSSSTSTSHKTTTASTASSSSPSSSSQTIRNSTS) are enriched in low complexity. A Glycyl lysine isopeptide (Lys-Gly) (interchain with G-Cter in ubiquitin) cross-link involves residue Lys27. Residues 58 to 70 (HSHHHHGQGHSHH) show a composition bias toward basic residues. A compositionally biased stretch (polar residues) spans 89–118 (KQYTSTSSSQVNLGMYHSDTNTRSSRSIAS). Position 129 is a phosphoserine (Ser129). Positions 134–145 (SNSSSQKSNAQD) are enriched in polar residues. Composition is skewed to low complexity over residues 160–177 (SLLP…SRCS) and 187–207 (NTSG…NNND). Over residues 243-252 (TNYNSSMTAP) the composition is skewed to polar residues. Ser283 is modified (phosphoserine). Over residues 289–300 (SSSTTATNSGND) the composition is skewed to low complexity. One can recognise a Ras-GEF domain in the interval 592-859 (DITTLADEVH…MKLSVQHEPP (268 aa)). Phosphoserine is present on residues Ser1012 and Ser1016. Thr1038 is modified (phosphothreonine). A phosphoserine mark is found at Ser1046, Ser1054, and Ser1128. Polar residues predominate over residues 1771–1794 (ISGTHSDNDHSYNINKNTGQTPSL). Positions 1771-1828 (ISGTHSDNDHSYNINKNTGQTPSLGSVMESNNSARNRRDSRASFSTNRSSVVSNSSHN) are disordered. The segment covering 1812–1828 (ASFSTNRSSVVSNSSHN) has biased composition (low complexity). A PH domain is found at 1846–1948 (GFNTSSSNYS…WIKMIKASKR (103 aa)). A Rho-GAP domain is found at 1967–2165 (VPLEDVCERE…DFIKNPNDYF (199 aa)).

GTPase-activating protein (GAP) for RHO1 and RHO2. Involved in the control of cellular morphogenesis. Required for proper bud site selection and bud emergence. The polypeptide is GTPase-activating protein BEM2/IPL2 (BEM2) (Saccharomyces cerevisiae (strain ATCC 204508 / S288c) (Baker's yeast)).